Consider the following 199-residue polypeptide: GTP cyclohydrolase-2 (199 aa).

GTP is bound at residue 49–53 (RIHSE). Residues Cys-54, Cys-65, and Cys-67 each coordinate Zn(2+). GTP contacts are provided by residues Gln-70, 92–94 (EGR), and Thr-114. The active-site Proton acceptor is Asp-126. Catalysis depends on Arg-128, which acts as the Nucleophile. The GTP site is built by Thr-149 and Lys-154.

This sequence belongs to the GTP cyclohydrolase II family. Homodimer. Requires Zn(2+) as cofactor.

The catalysed reaction is GTP + 4 H2O = 2,5-diamino-6-hydroxy-4-(5-phosphoribosylamino)-pyrimidine + formate + 2 phosphate + 3 H(+). It functions in the pathway cofactor biosynthesis; riboflavin biosynthesis; 5-amino-6-(D-ribitylamino)uracil from GTP: step 1/4. Catalyzes the conversion of GTP to 2,5-diamino-6-ribosylamino-4(3H)-pyrimidinone 5'-phosphate (DARP), formate and pyrophosphate. This Blochmanniella floridana protein is GTP cyclohydrolase-2.